The primary structure comprises 283 residues: Pantothenate synthetase (283 aa).

Residue 30–37 participates in ATP binding; the sequence is MGNLHAGH. Residue His-37 is the Proton donor of the active site. Gln-61 provides a ligand contact to (R)-pantoate. Position 61 (Gln-61) interacts with beta-alanine. 149–152 contributes to the ATP binding site; sequence GEKD. (R)-pantoate is bound at residue Gln-155. Residues Val-178 and 186–189 contribute to the ATP site; that span reads LSSR.

The protein belongs to the pantothenate synthetase family. As to quaternary structure, homodimer.

It is found in the cytoplasm. The catalysed reaction is (R)-pantoate + beta-alanine + ATP = (R)-pantothenate + AMP + diphosphate + H(+). It functions in the pathway cofactor biosynthesis; (R)-pantothenate biosynthesis; (R)-pantothenate from (R)-pantoate and beta-alanine: step 1/1. Its function is as follows. Catalyzes the condensation of pantoate with beta-alanine in an ATP-dependent reaction via a pantoyl-adenylate intermediate. This chain is Pantothenate synthetase, found in Pseudomonas paraeruginosa (strain DSM 24068 / PA7) (Pseudomonas aeruginosa (strain PA7)).